Reading from the N-terminus, the 437-residue chain is Integrase (437 aa).

The 86-residue stretch at 73–158 (WTVERWLTHW…TARTAFGEAY (86 aa)) folds into the Core-binding (CB) domain. The 250-residue stretch at 179–428 (EEVEPLEVED…DSVRNDVADR (250 aa)) folds into the Tyr recombinase domain. Catalysis depends on residues Arg-214, Lys-245, His-379, Arg-382, and Trp-405. Tyr-414 (O-(3'-phospho-DNA)-tyrosine intermediate) is an active-site residue.

It belongs to the 'phage' integrase family.

Its function is as follows. Is a recombinase (or integrase), catalyzing the cutting and rejoining of the recombining DNA molecules. This chain is Integrase (int), found in Saccharopolyspora erythraea (Streptomyces erythraeus).